The sequence spans 81 residues: uncharacterized protein (81 aa).

Residues 1–45 (MRTTIDVAGRLVIPKRIRERLGLRGNDQVEITERDGRIEIEPAPT) enclose the SpoVT-AbrB domain.

This sequence to B.subtilis SpoVT.

This is an uncharacterized protein from Mycobacterium bovis (strain ATCC BAA-935 / AF2122/97).